The sequence spans 714 residues: Fatty acid oxidation complex subunit alpha (714 aa).

The segment at 1–190 (MDTVSAFKLE…KAGLVDEVVP (190 aa)) is enoyl-CoA hydratase. The tract at residues 306–714 (GPLTSIAVLG…TFWPADERLT (409 aa)) is 3-hydroxyacyl-CoA dehydrogenase.

It in the N-terminal section; belongs to the enoyl-CoA hydratase/isomerase family. This sequence in the central section; belongs to the 3-hydroxyacyl-CoA dehydrogenase family. As to quaternary structure, heterotetramer of two alpha chains (FadJ) and two beta chains (FadI).

The protein resides in the cytoplasm. It catalyses the reaction a (3S)-3-hydroxyacyl-CoA = a (2E)-enoyl-CoA + H2O. It carries out the reaction a 4-saturated-(3S)-3-hydroxyacyl-CoA = a (3E)-enoyl-CoA + H2O. The catalysed reaction is a (3S)-3-hydroxyacyl-CoA + NAD(+) = a 3-oxoacyl-CoA + NADH + H(+). The enzyme catalyses (3S)-3-hydroxybutanoyl-CoA = (3R)-3-hydroxybutanoyl-CoA. It participates in lipid metabolism; fatty acid beta-oxidation. Catalyzes the formation of a hydroxyacyl-CoA by addition of water on enoyl-CoA. Also exhibits 3-hydroxyacyl-CoA epimerase and 3-hydroxyacyl-CoA dehydrogenase activities. The sequence is that of Fatty acid oxidation complex subunit alpha from Klebsiella pneumoniae (strain 342).